The following is a 1165-amino-acid chain: Valine--tRNA ligase (1165 aa).

The 'HIGH' region motif lies at 43–53; that stretch reads PNVTGSLHMGH. The 'KMSKS' region motif lies at 800-804; the sequence is KMSKT. Residue Lys-803 participates in ATP binding. 2 coiled-coil regions span residues 1001–1032 and 1097–1165; these read KNED…SDLQ and HVDL…VLRS.

Belongs to the class-I aminoacyl-tRNA synthetase family. ValS type 1 subfamily. In terms of assembly, monomer.

It is found in the cytoplasm. The catalysed reaction is tRNA(Val) + L-valine + ATP = L-valyl-tRNA(Val) + AMP + diphosphate. Catalyzes the attachment of valine to tRNA(Val). As ValRS can inadvertently accommodate and process structurally similar amino acids such as threonine, to avoid such errors, it has a 'posttransfer' editing activity that hydrolyzes mischarged Thr-tRNA(Val) in a tRNA-dependent manner. The protein is Valine--tRNA ligase of Aquifex aeolicus (strain VF5).